A 322-amino-acid chain; its full sequence is Secretion system apparatus protein SsaQ (322 aa).

This sequence belongs to the FliN/MopA/SpaO family.

Its function is as follows. Part of a type III secretion system. In Salmonella typhimurium (strain LT2 / SGSC1412 / ATCC 700720), this protein is Secretion system apparatus protein SsaQ (ssaQ).